Reading from the N-terminus, the 387-residue chain is 8-amino-7-oxononanoate synthase (387 aa).

R19 serves as a coordination point for substrate. 106–107 (GY) is a binding site for pyridoxal 5'-phosphate. H131 is a substrate binding site. Pyridoxal 5'-phosphate is bound by residues S177, H205, and T236. K239 is modified (N6-(pyridoxal phosphate)lysine). T353 contributes to the substrate binding site.

The protein belongs to the class-II pyridoxal-phosphate-dependent aminotransferase family. BioF subfamily. Homodimer. Requires pyridoxal 5'-phosphate as cofactor.

The catalysed reaction is 6-carboxyhexanoyl-[ACP] + L-alanine + H(+) = (8S)-8-amino-7-oxononanoate + holo-[ACP] + CO2. The protein operates within cofactor biosynthesis; biotin biosynthesis. Catalyzes the decarboxylative condensation of pimeloyl-[acyl-carrier protein] and L-alanine to produce 8-amino-7-oxononanoate (AON), [acyl-carrier protein], and carbon dioxide. The protein is 8-amino-7-oxononanoate synthase of Nitrosomonas europaea (strain ATCC 19718 / CIP 103999 / KCTC 2705 / NBRC 14298).